We begin with the raw amino-acid sequence, 143 residues long: Ribosome-binding factor A (143 aa).

A disordered region spans residues 123–143; the sequence is VRAQAAQAKPAGEANPYKERN. Residues 124–136 show a composition bias toward low complexity; the sequence is RAQAAQAKPAGEA.

It belongs to the RbfA family. In terms of assembly, monomer. Binds 30S ribosomal subunits, but not 50S ribosomal subunits or 70S ribosomes.

It is found in the cytoplasm. Functionally, one of several proteins that assist in the late maturation steps of the functional core of the 30S ribosomal subunit. Associates with free 30S ribosomal subunits (but not with 30S subunits that are part of 70S ribosomes or polysomes). Required for efficient processing of 16S rRNA. May interact with the 5'-terminal helix region of 16S rRNA. The protein is Ribosome-binding factor A of Corynebacterium urealyticum (strain ATCC 43042 / DSM 7109).